We begin with the raw amino-acid sequence, 315 residues long: Acetyl-coenzyme A carboxylase carboxyl transferase subunit alpha (315 aa).

The region spanning 40–293 (LQDKSKTLTE…REELSSQLAM (254 aa)) is the CoA carboxyltransferase C-terminal domain.

This sequence belongs to the AccA family. Acetyl-CoA carboxylase is a heterohexamer composed of biotin carboxyl carrier protein (AccB), biotin carboxylase (AccC) and two subunits each of ACCase subunit alpha (AccA) and ACCase subunit beta (AccD).

Its subcellular location is the cytoplasm. The enzyme catalyses N(6)-carboxybiotinyl-L-lysyl-[protein] + acetyl-CoA = N(6)-biotinyl-L-lysyl-[protein] + malonyl-CoA. It participates in lipid metabolism; malonyl-CoA biosynthesis; malonyl-CoA from acetyl-CoA: step 1/1. Its function is as follows. Component of the acetyl coenzyme A carboxylase (ACC) complex. First, biotin carboxylase catalyzes the carboxylation of biotin on its carrier protein (BCCP) and then the CO(2) group is transferred by the carboxyltransferase to acetyl-CoA to form malonyl-CoA. In Pseudomonas syringae pv. syringae (strain B728a), this protein is Acetyl-coenzyme A carboxylase carboxyl transferase subunit alpha.